The following is a 377-amino-acid chain: Molybdenum import ATP-binding protein ModC (377 aa).

The ABC transporter domain maps to 17–254 (ITGDEAIRAR…LDLPFAHDED (238 aa)). Position 52–59 (52–59 (GHSGSGKT)) interacts with ATP. The region spanning 313–377 (DSSILNVLPA…AQVKGVALLR (65 aa)) is the Mop domain.

The protein belongs to the ABC transporter superfamily. Molybdate importer (TC 3.A.1.8) family. In terms of assembly, the complex is composed of two ATP-binding proteins (ModC), two transmembrane proteins (ModB) and a solute-binding protein (ModA).

Its subcellular location is the cell inner membrane. It catalyses the reaction molybdate(out) + ATP + H2O = molybdate(in) + ADP + phosphate + H(+). Part of the ABC transporter complex ModABC involved in molybdenum import. Responsible for energy coupling to the transport system. The chain is Molybdenum import ATP-binding protein ModC from Aromatoleum aromaticum (strain DSM 19018 / LMG 30748 / EbN1) (Azoarcus sp. (strain EbN1)).